Consider the following 633-residue polypeptide: Phosphomethylpyrimidine synthase (633 aa).

Positions 1-13 are enriched in polar residues; it reads MNIRSNPDTTLPA. The disordered stretch occupies residues 1 to 22; the sequence is MNIRSNPDTTLPAVTTGPLPSS. Substrate is bound by residues Asn221, Met250, Tyr279, His315, 335 to 337, 376 to 379, and Glu415; these read SRG and DGLR. Residue His419 participates in Zn(2+) binding. Tyr442 serves as a coordination point for substrate. His483 contacts Zn(2+). The [4Fe-4S] cluster site is built by Cys563, Cys566, and Cys571.

The protein belongs to the ThiC family. As to quaternary structure, homodimer. [4Fe-4S] cluster serves as cofactor.

The catalysed reaction is 5-amino-1-(5-phospho-beta-D-ribosyl)imidazole + S-adenosyl-L-methionine = 4-amino-2-methyl-5-(phosphooxymethyl)pyrimidine + CO + 5'-deoxyadenosine + formate + L-methionine + 3 H(+). It functions in the pathway cofactor biosynthesis; thiamine diphosphate biosynthesis. Catalyzes the synthesis of the hydroxymethylpyrimidine phosphate (HMP-P) moiety of thiamine from aminoimidazole ribotide (AIR) in a radical S-adenosyl-L-methionine (SAM)-dependent reaction. The sequence is that of Phosphomethylpyrimidine synthase from Bradyrhizobium sp. (strain BTAi1 / ATCC BAA-1182).